Reading from the N-terminus, the 503-residue chain is 3-octaprenyl-4-hydroxybenzoate carboxy-lyase (503 aa).

Residue Asn-176 participates in Mn(2+) binding. Residues Ile-179 to Arg-181, Arg-193 to Leu-195, and Arg-198 to Gly-199 contribute to the prenylated FMN site. Glu-242 provides a ligand contact to Mn(2+). Asp-303 acts as the Proton donor in catalysis.

It belongs to the UbiD family. As to quaternary structure, homohexamer. It depends on prenylated FMN as a cofactor. The cofactor is Mn(2+).

Its subcellular location is the cell membrane. The catalysed reaction is a 4-hydroxy-3-(all-trans-polyprenyl)benzoate + H(+) = a 2-(all-trans-polyprenyl)phenol + CO2. The protein operates within cofactor biosynthesis; ubiquinone biosynthesis. Catalyzes the decarboxylation of 3-octaprenyl-4-hydroxy benzoate to 2-octaprenylphenol, an intermediate step in ubiquinone biosynthesis. The protein is 3-octaprenyl-4-hydroxybenzoate carboxy-lyase of Ralstonia nicotianae (strain ATCC BAA-1114 / GMI1000) (Ralstonia solanacearum).